The following is a 289-amino-acid chain: Aquaporin PIP1-2 (289 aa).

Positions methionine 1 to glutamate 36 are disordered. 2 consecutive transmembrane segments (helical) span residues isoleucine 58–valine 78 and isoleucine 93–histidine 115. The short motif at asparagine 117 to alanine 119 is the NPA 1 element. Helical transmembrane passes span leucine 136–phenylalanine 156, glycine 178–alanine 198, and isoleucine 212–isoleucine 232. An NPA 2 motif is present at residues asparagine 238–alanine 240. Residues isoleucine 260–isoleucine 280 form a helical membrane-spanning segment.

This sequence belongs to the MIP/aquaporin (TC 1.A.8) family. PIP (TC 1.A.8.11) subfamily. Interacts with PIP2-1 to form heteromers. As to expression, highly expressed in developing tassels and at lower levels in roots, shoots, ears and embryos. Expressed in the root growing zone at 5-6 mm from the root tip. Expressed in xylem parenchyma.

It localises to the cell membrane. In terms of biological role, water channel required to facilitate the transport of water across cell membrane. Active as heteromers with PIP1-1, PIP2-1, PIP2-4 or PIP2-5, but not as homomers. The polypeptide is Aquaporin PIP1-2 (PIP1-2) (Zea mays (Maize)).